A 345-amino-acid chain; its full sequence is Protein lifeguard 1 (345 aa).

Residues 1 to 115 (MSHEKSFLVS…GNYQEEGPPS (115 aa)) are disordered. Composition is skewed to pro residues over residues 24-46 (APMP…PFQP) and 79-98 (GPYP…PPFQ). 7 consecutive transmembrane segments (helical) span residues 139-159 (VFLV…IFTF), 171-191 (VWTY…LSCC), 202-222 (LVAL…IASF), 227-247 (AVIM…IFSM), 257-277 (MGVL…CIFI), 281-301 (ILEI…LAVD), and 320-340 (FAAL…LTII).

Belongs to the BI1 family. LFG subfamily.

It is found in the membrane. Functionally, potential apoptotic regulator. The protein is Protein lifeguard 1 (Grina) of Mus musculus (Mouse).